Here is a 746-residue protein sequence, read N- to C-terminus: Hyperosmolality-gated Ca2+ permeable channel 2.1 (746 aa).

10 helical membrane passes run Ile3–Leu23, Met90–Leu110, Leu144–Phe164, Ile357–Ile377, Val405–Leu425, Ala445–Gly465, Ala492–Met512, Val560–Tyr580, Ile601–Phe621, and Leu623–Phe643. Over residues Leu692–Glu702 the composition is skewed to polar residues. The disordered stretch occupies residues Leu692–Gly723. Positions Lys708 to Gly723 are enriched in basic and acidic residues.

Belongs to the CSC1 (TC 1.A.17) family.

It is found in the membrane. Its function is as follows. Acts as an osmosensitive calcium-permeable cation channel. The sequence is that of Hyperosmolality-gated Ca2+ permeable channel 2.1 from Arabidopsis thaliana (Mouse-ear cress).